A 498-amino-acid chain; its full sequence is Histidine--tRNA ligase (498 aa).

The protein belongs to the class-II aminoacyl-tRNA synthetase family. In terms of assembly, homodimer.

It is found in the cytoplasm. The enzyme catalyses tRNA(His) + L-histidine + ATP = L-histidyl-tRNA(His) + AMP + diphosphate + H(+). The chain is Histidine--tRNA ligase from Bartonella quintana (strain Toulouse) (Rochalimaea quintana).